A 192-amino-acid polypeptide reads, in one-letter code: Xanthine phosphoribosyltransferase (192 aa).

L20 and N27 together coordinate xanthine. 128-132 lines the 5-phospho-alpha-D-ribose 1-diphosphate pocket; sequence AHGEA. K156 contacts xanthine.

It belongs to the purine/pyrimidine phosphoribosyltransferase family. Xpt subfamily. In terms of assembly, homodimer.

It localises to the cytoplasm. It carries out the reaction XMP + diphosphate = xanthine + 5-phospho-alpha-D-ribose 1-diphosphate. It functions in the pathway purine metabolism; XMP biosynthesis via salvage pathway; XMP from xanthine: step 1/1. In terms of biological role, converts the preformed base xanthine, a product of nucleic acid breakdown, to xanthosine 5'-monophosphate (XMP), so it can be reused for RNA or DNA synthesis. This is Xanthine phosphoribosyltransferase from Lactobacillus acidophilus (strain ATCC 700396 / NCK56 / N2 / NCFM).